The primary structure comprises 449 residues: UDP-N-acetylmuramoylalanine--D-glutamate ligase (449 aa).

119–125 (GTNGKTT) contacts ATP.

Belongs to the MurCDEF family.

The protein localises to the cytoplasm. It carries out the reaction UDP-N-acetyl-alpha-D-muramoyl-L-alanine + D-glutamate + ATP = UDP-N-acetyl-alpha-D-muramoyl-L-alanyl-D-glutamate + ADP + phosphate + H(+). It participates in cell wall biogenesis; peptidoglycan biosynthesis. In terms of biological role, cell wall formation. Catalyzes the addition of glutamate to the nucleotide precursor UDP-N-acetylmuramoyl-L-alanine (UMA). In Lactococcus lactis subsp. cremoris (strain MG1363), this protein is UDP-N-acetylmuramoylalanine--D-glutamate ligase.